The sequence spans 313 residues: Carbamate kinase (313 aa).

Belongs to the carbamate kinase family.

It is found in the cytoplasm. It carries out the reaction hydrogencarbonate + NH4(+) + ATP = carbamoyl phosphate + ADP + H2O + H(+). The protein operates within metabolic intermediate metabolism; carbamoyl phosphate degradation; CO(2) and NH(3) from carbamoyl phosphate: step 1/1. The polypeptide is Carbamate kinase (arcC) (Oenococcus oeni (Leuconostoc oenos)).